The chain runs to 326 residues: N-acetyl-gamma-glutamyl-phosphate reductase (326 aa).

The active site involves Cys155.

The protein belongs to the NAGSA dehydrogenase family. Type 1 subfamily.

It is found in the cytoplasm. It carries out the reaction N-acetyl-L-glutamate 5-semialdehyde + phosphate + NADP(+) = N-acetyl-L-glutamyl 5-phosphate + NADPH + H(+). The protein operates within amino-acid biosynthesis; L-arginine biosynthesis; N(2)-acetyl-L-ornithine from L-glutamate: step 3/4. Its function is as follows. Catalyzes the NADPH-dependent reduction of N-acetyl-5-glutamyl phosphate to yield N-acetyl-L-glutamate 5-semialdehyde. The protein is N-acetyl-gamma-glutamyl-phosphate reductase of Shewanella sp. (strain MR-4).